We begin with the raw amino-acid sequence, 37 residues long: Cytochrome b6-f complex subunit 5 (37 aa).

Residues 5–25 (LLSGIVLGLITVSALGLFVAA) form a helical membrane-spanning segment.

It belongs to the PetG family. In terms of assembly, the 4 large subunits of the cytochrome b6-f complex are cytochrome b6, subunit IV (17 kDa polypeptide, PetD), cytochrome f and the Rieske protein, while the 4 small subunits are PetG, PetL, PetM and PetN. The complex functions as a dimer.

The protein resides in the plastid. The protein localises to the chloroplast thylakoid membrane. Functionally, component of the cytochrome b6-f complex, which mediates electron transfer between photosystem II (PSII) and photosystem I (PSI), cyclic electron flow around PSI, and state transitions. PetG is required for either the stability or assembly of the cytochrome b6-f complex. The chain is Cytochrome b6-f complex subunit 5 from Phaeodactylum tricornutum (strain CCAP 1055/1).